Reading from the N-terminus, the 431-residue chain is Histidine--tRNA ligase (431 aa).

Belongs to the class-II aminoacyl-tRNA synthetase family.

The protein localises to the cytoplasm. It catalyses the reaction tRNA(His) + L-histidine + ATP = L-histidyl-tRNA(His) + AMP + diphosphate + H(+). This is Histidine--tRNA ligase (hisS) from Pyrococcus abyssi (strain GE5 / Orsay).